Here is a 112-residue protein sequence, read N- to C-terminus: Large ribosomal subunit protein P2A (112 aa).

The disordered stretch occupies residues 83-112 (GAAPAAEAKKEEKVEEKEESDDDMGFSLFD). The span at 89–98 (EAKKEEKVEE) shows a compositional bias: basic and acidic residues.

Belongs to the eukaryotic ribosomal protein P1/P2 family. As to quaternary structure, P1 and P2 exist as dimers at the large ribosomal subunit. In terms of processing, phosphorylated.

In terms of biological role, plays an important role in the elongation step of protein synthesis. In Zea mays (Maize), this protein is Large ribosomal subunit protein P2A (RPP2A).